We begin with the raw amino-acid sequence, 219 residues long: MNKDGQDLSDIRRAMVRCQLVPRGISDGRVLEAMERVPREQFVPEHLRFEAYEDHPVPIGQGQTISQPYIVALMAEALCLKGRERVLDIGTGSGYAAAVLASLALEVFSIERIPELAAQARKNLDRTGFTQVHVKCADGTLGWPEAAPFDGICVAAGAPAVPAALKQQLAVGGRLVIPVGTEGGLQQLLCITRLSDSEYEQASYGDVRFVPLLGEEGWP.

Ser-66 is a catalytic residue.

It belongs to the methyltransferase superfamily. L-isoaspartyl/D-aspartyl protein methyltransferase family.

It is found in the cytoplasm. The catalysed reaction is [protein]-L-isoaspartate + S-adenosyl-L-methionine = [protein]-L-isoaspartate alpha-methyl ester + S-adenosyl-L-homocysteine. Catalyzes the methyl esterification of L-isoaspartyl residues in peptides and proteins that result from spontaneous decomposition of normal L-aspartyl and L-asparaginyl residues. It plays a role in the repair and/or degradation of damaged proteins. The polypeptide is Protein-L-isoaspartate O-methyltransferase 2 (Marinobacter nauticus (strain ATCC 700491 / DSM 11845 / VT8) (Marinobacter aquaeolei)).